Consider the following 136-residue polypeptide: Protein NrdI (136 aa).

It belongs to the NrdI family.

Its function is as follows. Probably involved in ribonucleotide reductase function. The protein is Protein NrdI of Shigella boydii serotype 4 (strain Sb227).